The primary structure comprises 414 residues: 11-beta-hydroxysteroid dehydrogenase type 2 (414 aa).

The next 4 helical transmembrane spans lie at D3–V23, F26–L46, A52–F72, and Y341–I361. The segment at K382 to D414 is disordered. Positions Q384–E397 are enriched in polar residues.

This sequence belongs to the short-chain dehydrogenases/reductases (SDR) family. Broadly expressed in peripheral (brain, gill, eye, heart, liver, head kidney, posterior kidney, and gut).

It localises to the membrane. The enzyme catalyses an 11beta-hydroxysteroid + NAD(+) = an 11-oxosteroid + NADH + H(+). It catalyses the reaction cortisol + NAD(+) = cortisone + NADH + H(+). The catalysed reaction is corticosterone + NAD(+) = 11-dehydrocorticosterone + NADH + H(+). It carries out the reaction 11beta,17beta-dihydroxyandrost-4-ene-3-one + NAD(+) = 17beta-hydroxyandrost-4-ene-3,11-dione + NADH + H(+). The enzyme catalyses 11beta-hydroxyandrost-4-ene-3,17-dione + NAD(+) = androst-4-ene-3,11,17-trione + NADH + H(+). It participates in steroid metabolism. Functionally, catalyzes the conversion of biologically active 11beta-hydroxyglucocorticoids (11beta-hydroxysteroid) such as cortisol, to inactive 11-ketoglucocorticoids (11-oxosteroid) such as cortisone, in the presence of NAD(+). Cortisol is the primary glucocorticoid in teleosts and is released to increase glucose bioavailability in order to meet the increased energy demands in response to stress. Functions as a dehydrogenase (oxidase), thereby decreasing the concentration of active glucocorticoids, regulating the hypothalamus-pituitary-interrenal (HPI) axis function in adult fish. Decreasing the excess glucocorticoids may be of relevance to brain function and neural proliferation. Plays a key role by catalyzing the oxidation of 11beta-hydroxytestosterone (11beta,17beta-dihydroxyandrost-4-ene-3-one) to 11-ketotestosterone (17beta-hydroxyandrost-4-ene-3,11-dione), the major fish androgen, that activates androgen receptor transcriptional activity. Catalyzes the conversion of 11beta-hydroxyandrostenedione (11beta-hydroxyandrost-4-ene-3,17-dione) to 11-ketoandrostenedione (androst-4-ene-3,11,17-trione), which can be further metabolized to 11-ketotestosterone. Exerts a dual role in fish by inactivating glucocorticoids and activating androgens. This is 11-beta-hydroxysteroid dehydrogenase type 2 (hsd11b2) from Danio rerio (Zebrafish).